We begin with the raw amino-acid sequence, 220 residues long: Urease accessory protein UreF (220 aa).

The protein belongs to the UreF family. UreD, UreF and UreG form a complex that acts as a GTP-hydrolysis-dependent molecular chaperone, activating the urease apoprotein by helping to assemble the nickel containing metallocenter of UreC. The UreE protein probably delivers the nickel.

The protein resides in the cytoplasm. Its function is as follows. Required for maturation of urease via the functional incorporation of the urease nickel metallocenter. This Jannaschia sp. (strain CCS1) protein is Urease accessory protein UreF.